Consider the following 3430-residue polypeptide: Genome polyprotein (3430 aa).

The tract at residues 2–15 (SKKPGGPGKNRAVN) is interaction with host EXOC1. Topologically, residues 2 to 105 (SKKPGGPGKN…NRRSTKQKKR (104 aa)) are cytoplasmic. Positions 37–72 (LIDGKGPIRFVLALLAFFRFTAIAPTRAVLDRWRGV) are hydrophobic; homodimerization of capsid protein C. Positions 106–123 (GGTAGFTILLGLIACAGA) are cleaved as a propeptide — ER anchor for the capsid protein C, removed in mature form by serine protease NS3. Residues 106–126 (GGTAGFTILLGLIACAGAVTL) traverse the membrane as a helical segment. The Extracellular segment spans residues 127–248 (SNFQGKVMMT…KATRYLVKTE (122 aa)). Residue Asn-138 is glycosylated (N-linked (GlcNAc...) asparagine; by host). The chain crosses the membrane as a helical span at residues 249–269 (SWILRNPGYALVAAVIGWMLG). The Cytoplasmic portion of the chain corresponds to 270–275 (SNTMQR). The helical transmembrane segment at 276-290 (VVFAILLLLVAPAYS) threads the bilayer. Residues 291 to 739 (FNCLGMSNRD…QVFGGAFRSL (449 aa)) lie on the Extracellular side of the membrane. 6 disulfide bridges follow: Cys-293–Cys-320, Cys-350–Cys-406, Cys-364–Cys-395, Cys-382–Cys-411, Cys-476–Cys-574, and Cys-591–Cys-622. The tract at residues 388-401 (DRGWGNGCGLFGKG) is fusion peptide. The chain crosses the membrane as a helical span at residues 740–760 (FGGMSWITQGLLGALLLWMGI). Topologically, residues 761–766 (NARDRS) are cytoplasmic. Residues 767–787 (IAMTFLAVGGVLLFLSVNVHA) traverse the membrane as a helical segment. At 788-1212 (DTGCAIDIGR…AFAEANSGGD (425 aa)) the chain is on the extracellular side. Disulfide bonds link Cys-791-Cys-802 and Cys-842-Cys-930. N-linked (GlcNAc...) asparagine; by host glycans are attached at residues Asn-917, Asn-962, and Asn-994. Cystine bridges form between Cys-966–Cys-1010, Cys-1067–Cys-1116, Cys-1078–Cys-1099, and Cys-1100–Cys-1103. A helical transmembrane segment spans residues 1213 to 1233 (VVHLALMATFKIQPVFLVASF). Over 1234–1243 (LKARWTNQES) the chain is Cytoplasmic. The chain crosses the membrane as a helical span at residues 1244–1264 (ILLMLAAAFFQMAYYDAKNVL). Residues 1265 to 1278 (SWEVPDVLNSLSVA) lie on the Lumenal side of the membrane. The helical transmembrane segment at 1279–1299 (WMILRAISFTNTSNVVVPLLA) threads the bilayer. The Cytoplasmic portion of the chain corresponds to 1300–1307 (LLTPGLKC). A helical transmembrane segment spans residues 1308 to 1328 (LNLDVYRILLLMVGVGSLIKE). Residues 1329–1340 (KRSSAAKKKGAC) lie on the Lumenal side of the membrane. The chain crosses the membrane as a helical span at residues 1341–1361 (LICLALASTGVFNPMILAAGL). Over 1362–1371 (MACDPNRKRG) the chain is Cytoplasmic. Residues 1372–1392 (WPATEVMTAVGLMFAIVGGLA) form a helical membrane-spanning segment. Residues 1393-1395 (ELD) are Lumenal-facing. A helical transmembrane segment spans residues 1396 to 1416 (IDSMAIPMTIAGLMFAAFVIS). Residues 1417–1473 (GKSTDMWIERTADITWESDAEITGSSERVDVRLDDDGNFQLMNDPGAPWKIWMLRMA) are Cytoplasmic-facing. The interacts with and activates NS3 protease stretch occupies residues 1424-1463 (IERTADITWESDAEITGSSERVDVRLDDDGNFQLMNDPGA). Positions 1474–1494 (CLAISAYTPWAILPSVIGFWI) form an intramembrane region, helical. The Cytoplasmic portion of the chain corresponds to 1495 to 2170 (TLQYTKRGGV…RMALEELPDA (676 aa)). The region spanning 1502 to 1679 (GGVLWDTPSP…ERMEEPAPAG (178 aa)) is the Peptidase S7 domain. Catalysis depends on charge relay system; for serine protease NS3 activity residues His-1552, Asp-1576, and Ser-1636. A Helicase ATP-binding domain is found at 1682-1838 (PEMLRKKQIT…ESNAPISDMQ (157 aa)). The interval 1686–1689 (RKKQ) is important for RNA-binding. Residue 1695-1702 (LHPGAGKT) participates in ATP binding. The DEAH box motif lies at 1786–1789 (DEAH). In terms of domain architecture, Helicase C-terminal spans 1849 to 2014 (GYEWITEYVG…GLVAQLYQPE (166 aa)). Lys-1890 is modified (N6-acetyllysine; by host). The interval 2165–2169 (EELPD) is regulates the ATPase activity of NS3 helicase. A helical transmembrane segment spans residues 2171-2191 (LQTIVLIALLSVMSLGVFFLL). Residues 2192 to 2196 (MQRKG) lie on the Lumenal side of the membrane. Residues 2197–2217 (IGKIGLGGVILGAATFFCWMA) constitute an intramembrane region (helical). Residue Glu-2218 is a topological domain, lumenal. A helical membrane pass occupies residues 2219–2239 (VPGTKIAGMLLLSLLLMIVLI). Residues 2240-2254 (PEPEKQRSQTDNQLA) are Cytoplasmic-facing. Residues 2255-2275 (VFLICVLTLVGAVAANEMGWL) traverse the membrane as a helical segment. At 2276–2309 (DKTKNDIGSLLGHRPEARETTLGVESFLLDLRPA) the chain is on the lumenal side. Positions 2310–2330 (TAWSLYAVTTAVLTPLLKHLI) form an intramembrane region, helical. The Lumenal segment spans residues 2331 to 2377 (TSDYINTSLTSINVQASALFTLARGFPFVDVGVSALLLAVGCWGQVT). Residues 2378-2398 (LTVTVTAAALLFCHYAYMVPG) form a helical membrane-spanning segment. The Cytoplasmic portion of the chain corresponds to 2399-2441 (WQAEAMRSAQRRTAAGIMKNVVVDGIVATDVPELERTTPVMQK). Residues 2442-2462 (KVGQIILILVSMAAVVVNPSV) form a helical membrane-spanning segment. The Lumenal segment spans residues 2463–2467 (RTVRE). Residues 2468 to 2488 (AGILTTAAAVTLWENGASSVW) form a helical membrane-spanning segment. Topologically, residues 2489–3430 (NATTAIGLCH…DTIVVEDTVL (942 aa)) are cytoplasmic. The mRNA cap 0-1 NS5-type MT domain maps to 2526 to 2791 (GGAKGRTLGE…DVNLGSGTRA (266 aa)). Ser-2581 lines the S-adenosyl-L-methionine pocket. At Ser-2581 the chain carries Phosphoserine. The active-site For 2'-O-MTase activity is the Lys-2586. S-adenosyl-L-methionine is bound by residues Gly-2611, Trp-2612, Thr-2629, Lys-2630, Asp-2656, and Val-2657. Asp-2671 serves as the catalytic For 2'-O-MTase activity. Ile-2672 contacts S-adenosyl-L-methionine. Residues Lys-2707 and Glu-2743 each act as for 2'-O-MTase activity in the active site. Tyr-2745 is a binding site for S-adenosyl-L-methionine. The short motif at 2914-2916 (RDK) is the Nuclear localization signal element. Zn(2+) is bound by residues Glu-2965, His-2969, Cys-2974, and Cys-2977. Positions 3055–3207 (GKVYADDTAG…KPLDDRFATS (153 aa)) constitute a RdRp catalytic domain. Positions 3242, 3258, and 3377 each coordinate Zn(2+). Positions 3428-3430 (TVL) match the PDZ-binding motif.

It in the N-terminal section; belongs to the class I-like SAM-binding methyltransferase superfamily. mRNA cap 0-1 NS5-type methyltransferase family. As to quaternary structure, homodimer. Interacts (via N-terminus) with host EXOC1 (via C-terminus); this interaction results in EXOC1 degradation through the proteasome degradation pathway. Interacts with host DDX56; this interaction plays an important role in genomic RNA encapsidation. In terms of assembly, forms heterodimers with envelope protein E in the endoplasmic reticulum and Golgi. Homodimer; in the endoplasmic reticulum and Golgi. As to quaternary structure, homodimer; Homohexamer when secreted. Interacts with envelope protein E. NS1 interacts with NS4B. Interacts with host complement protein CFH; this interaction leads to the degradation of C3. In terms of assembly, interacts (via N-terminus) with serine protease NS3. Forms a heterodimer with serine protease NS3. May form homooligomers. As to quaternary structure, forms a heterodimer with NS2B. Interacts with NS4B. Interacts with unphosphorylated RNA-directed RNA polymerase NS5; this interaction stimulates RNA-directed RNA polymerase NS5 guanylyltransferase activity. In terms of assembly, interacts with Serine protease/Helicase NS3. Interacts with NS1. Homodimer. Interacts with host STAT2; this interaction inhibits the phosphorylation of the latter, and, when all viral proteins are present (polyprotein), targets STAT2 for degradation. Interacts with host PAF1 complex. Post-translationally, specific enzymatic cleavages in vivo yield mature proteins. Cleavages in the lumen of endoplasmic reticulum are performed by host signal peptidase, whereas cleavages in the cytoplasmic side are performed by serine protease NS3. Signal cleavage at the 2K-4B site requires a prior NS3 protease-mediated cleavage at the 4A-2K site. In terms of processing, cleaved in post-Golgi vesicles by a host furin, releasing the mature small envelope protein M, and peptide pr. This cleavage is incomplete as up to 30% of viral particles still carry uncleaved prM. Not N-glycosylated. Post-translationally, N-glycosylated. The excreted form is glycosylated and this is required for efficient secretion of the protein from infected cells. In terms of processing, acetylated by host KAT5. Acetylation modulates NS3 RNA-binding and unwinding activities and plays an important positive role for viral replication. Phosphorylated on serines residues. This phosphorylation may trigger NS5 nuclear localization.

The protein resides in the virion. Its subcellular location is the host nucleus. The protein localises to the host cytoplasm. It localises to the host perinuclear region. It is found in the secreted. The protein resides in the virion membrane. Its subcellular location is the host endoplasmic reticulum membrane. It carries out the reaction Selective hydrolysis of -Xaa-Xaa-|-Yaa- bonds in which each of the Xaa can be either Arg or Lys and Yaa can be either Ser or Ala.. It catalyses the reaction RNA(n) + a ribonucleoside 5'-triphosphate = RNA(n+1) + diphosphate. The catalysed reaction is a ribonucleoside 5'-triphosphate + H2O = a ribonucleoside 5'-diphosphate + phosphate + H(+). The enzyme catalyses ATP + H2O = ADP + phosphate + H(+). It carries out the reaction a 5'-end (5'-triphosphoguanosine)-ribonucleoside in mRNA + S-adenosyl-L-methionine = a 5'-end (N(7)-methyl 5'-triphosphoguanosine)-ribonucleoside in mRNA + S-adenosyl-L-homocysteine. It catalyses the reaction a 5'-end (N(7)-methyl 5'-triphosphoguanosine)-ribonucleoside in mRNA + S-adenosyl-L-methionine = a 5'-end (N(7)-methyl 5'-triphosphoguanosine)-(2'-O-methyl-ribonucleoside) in mRNA + S-adenosyl-L-homocysteine + H(+). Functionally, plays a role in virus budding by binding to the cell membrane and gathering the viral RNA into a nucleocapsid that forms the core of a mature virus particle. During virus entry, may induce genome penetration into the host cytoplasm after hemifusion induced by the surface proteins. Can migrate to the cell nucleus where it modulates host functions. Overcomes the anti-viral effects of host EXOC1 by sequestering and degrading the latter through the proteasome degradation pathway. Its function is as follows. Inhibits RNA silencing by interfering with host Dicer. Prevents premature fusion activity of envelope proteins in trans-Golgi by binding to envelope protein E at pH6.0. After virion release in extracellular space, gets dissociated from E dimers. In terms of biological role, acts as a chaperone for envelope protein E during intracellular virion assembly by masking and inactivating envelope protein E fusion peptide. prM is the only viral peptide matured by host furin in the trans-Golgi network probably to avoid catastrophic activation of the viral fusion activity in acidic Golgi compartment prior to virion release. prM-E cleavage is inefficient, and many virions are only partially matured. These uncleaved prM would play a role in immune evasion. Functionally, may play a role in virus budding. Exerts cytotoxic effects by activating a mitochondrial apoptotic pathway through M ectodomain. May display a viroporin activity. Its function is as follows. Binds to host cell surface receptor and mediates fusion between viral and cellular membranes. Envelope protein is synthesized in the endoplasmic reticulum in the form of heterodimer with protein prM. They play a role in virion budding in the ER, and the newly formed immature particle is covered with 60 spikes composed of heterodimer between precursor prM and envelope protein E. The virion is transported to the Golgi apparatus where the low pH causes dissociation of PrM-E heterodimers and formation of E homodimers. prM-E cleavage is inefficient, and many virions are only partially matured. These uncleaved prM would play a role in immune evasion. Involved in immune evasion, pathogenesis and viral replication. Once cleaved off the polyprotein, is targeted to three destinations: the viral replication cycle, the plasma membrane and the extracellular compartment. Essential for viral replication. Required for formation of the replication complex and recruitment of other non-structural proteins to the ER-derived membrane structures. Excreted as a hexameric lipoparticle that plays a role against host immune response. Antagonizing the complement function. Binds to the host macrophages and dendritic cells. Inhibits signal transduction originating from Toll-like receptor 3 (TLR3). In terms of biological role, component of the viral RNA replication complex that functions in virion assembly and antagonizes the host alpha/beta interferon antiviral response. Functionally, required cofactor for the serine protease function of NS3. May have membrane-destabilizing activity and form viroporins. Its function is as follows. Displays three enzymatic activities: serine protease, NTPase and RNA helicase. NS3 serine protease, in association with NS2B, performs its autocleavage and cleaves the polyprotein at dibasic sites in the cytoplasm: C-prM, NS2A-NS2B, NS2B-NS3, NS3-NS4A, NS4A-2K and NS4B-NS5. NS3 RNA helicase binds RNA and unwinds dsRNA in the 3' to 5' direction. NS3 supports the separation of RNA daughter and template strands during viral replication. The helicase part is involved in the inhibition of phosphorylation of host STAT1, and thereby inhibition of host type-I IFN signaling. In addition, NS3 assists the initiation of replication by unwinding the RNA secondary structure in the 3' non-translated region (NTR). Inhibits STAT2 translocation in the nucleus after IFN-alpha treatment. Regulates the ATPase activity of the NS3 helicase activity. NS4A allows NS3 helicase to conserve energy during unwinding. In terms of biological role, functions as a signal peptide for NS4B and is required for the interferon antagonism activity of the latter. Functionally, induces the formation of ER-derived membrane vesicles where the viral replication takes place. Inhibits interferon (IFN)-induced host STAT1 phosphorylation and nuclear translocation, thereby preventing the establishment of cellular antiviral state by blocking the IFN-alpha/beta pathway. Inhibits STAT2 translocation in the nucleus after IFN-alpha treatment. Its function is as follows. Replicates the viral (+) and (-) RNA genome, and performs the capping of genomes in the cytoplasm. NS5 methylates viral RNA cap at guanine N-7 and ribose 2'-O positions. Besides its role in RNA genome replication, also prevents the establishment of cellular antiviral state by blocking the interferon-alpha/beta (IFN-alpha/beta) signaling pathway. Inhibits host TYK2 and STAT2 phosphorylation, thereby preventing activation of JAK-STAT signaling pathway. In Aedes (Tropical bont tick), this protein is Genome polyprotein.